The following is a 468-amino-acid chain: MRISQLEGKAVALWGWAREGRAAYRALRQQLPAQPLTVFCNAEEARDVAALADPALQVQTEASAQALAAFEVVIKSPGISPYREEARAAAAQGARFIGGTALWFAEHAQPDGYVPGAICVTGTKGKSTTTALLAHLLRADGHRTALVGNIGQPLLEVLSPQPPPAYWAIELSSYQTGEVGRSGARPELALVLNLFPEHLDWHGSEAAYVRDKLALVTDGRPRIALLNAADPHLAQLQLPESEVRWFNHPDGWHLRGDVVYRGQQPIFDTANVPLPGEHNRRNLCAVLAAVEALGLDAAALAPAALTFRPLPNRLQWLGSVDGIAYVNDSISTTPHASLAALACFAQQRVALLVGGHDRGLDWQEFAAHMAQQAPLEIVTMGANGPRIHALLAPLAQSAGFGLHAADDLAHAMQLARSALGAQGGVLLLSPGAPSFGVYSDYVARGRHFAQLAGFDPAAISAIPGLGVQ.

122–128 (GTKGKST) lines the ATP pocket.

This sequence belongs to the MurCDEF family. MurD2 subfamily.

Its subcellular location is the cytoplasm. The enzyme catalyses UDP-N-acetyl-alpha-D-muramoyl-L-alanine + L-glutamate + ATP = UDP-N-acetyl-alpha-D-muramoyl-L-alanyl-L-glutamate + ADP + phosphate + H(+). The protein operates within cell wall biogenesis; peptidoglycan biosynthesis. Its function is as follows. Cell wall formation. Catalyzes the addition of L-glutamate to the nucleotide precursor UDP-N-acetylmuramoyl-L-alanine. This Xanthomonas campestris pv. campestris (strain 8004) protein is UDP-N-acetylmuramoyl-L-alanine--L-glutamate ligase.